Here is a 376-residue protein sequence, read N- to C-terminus: Arf-GAP with dual PH domain-containing protein 2 (376 aa).

One can recognise an Arf-GAP domain in the interval 9-130 (KRLLELLQAA…EFMAEKAVSP (122 aa)). The segment at 25–48 (CADCGAADPDWASYKLGVFICLHC) adopts a C4-type zinc-finger fold. 2 PH domains span residues 131–232 (PGDR…AARL) and 254–360 (NYLK…GVLS).

In terms of tissue distribution, expressed in many tissues, with highest levels in fat, heart and skeletal muscle. Also detected in kidney, liver and lung.

Its subcellular location is the cytoplasm. It is found in the cell membrane. Its function is as follows. GTPase-activating protein for the ADP ribosylation factor family (Potential). Binds phosphatidylinositol 4,5-bisphosphate, phosphatidylinositol 3,4,5-trisphosphate (PtdInsP3) and inositol 1,3,4,5-tetrakisphosphate (InsP4). Binding of phosphatidylinositol 3,5-bisphosphate and phosphatidylinositol 3,4-bisphosphate occurs at a much lower affinity. Possesses a stoichiometry of two binding sites for InsP4 with identical affinity. The protein is Arf-GAP with dual PH domain-containing protein 2 (Adap2) of Rattus norvegicus (Rat).